The primary structure comprises 100 residues: Urease subunit gamma (100 aa).

It belongs to the urease gamma subunit family. As to quaternary structure, heterotrimer of UreA (gamma), UreB (beta) and UreC (alpha) subunits. Three heterotrimers associate to form the active enzyme.

It localises to the cytoplasm. It catalyses the reaction urea + 2 H2O + H(+) = hydrogencarbonate + 2 NH4(+). Its pathway is nitrogen metabolism; urea degradation; CO(2) and NH(3) from urea (urease route): step 1/1. This chain is Urease subunit gamma, found in Herpetosiphon aurantiacus (strain ATCC 23779 / DSM 785 / 114-95).